Here is a 416-residue protein sequence, read N- to C-terminus: CC-adding tRNA nucleotidyltransferase (416 aa).

A CTP-binding site is contributed by 31-34; that stretch reads GAVR. 2 residues coordinate Mg(2+): aspartate 46 and aspartate 48. CTP is bound by residues 106 to 107, asparagine 111, 148 to 157, and arginine 188; these read RD and DPLRLLRAYR.

It belongs to the tRNA nucleotidyltransferase/poly(A) polymerase family. It depends on Mg(2+) as a cofactor.

It catalyses the reaction a tRNA precursor + 2 CTP = a tRNA with a 3' CC end + 2 diphosphate. TRNA nucleotidyltransferase involved in the synthesis of the tRNA CCA terminus. Adds the two cytidine residues to tRNA. The sequence is that of CC-adding tRNA nucleotidyltransferase from Synechocystis sp. (strain ATCC 27184 / PCC 6803 / Kazusa).